The primary structure comprises 572 residues: Glutathione hydrolase 5 proenzyme (572 aa).

The Cytoplasmic segment spans residues 1-6; that stretch reads MAWGHR. Residues 7–29 form a helical; Signal-anchor for type II membrane protein membrane-spanning segment; the sequence is TTVCLVLLGVSLGLAIIVLAVVL. The Extracellular portion of the chain corresponds to 30-572; sequence PHHQASCRPD…LRKAGKASGY (543 aa). Asn-98 carries an N-linked (GlcNAc...) asparagine glycan. Arg-110 contacts L-glutamate. Residues Asn-185, Asn-194, Asn-204, Asn-277, Asn-303, Asn-347, and Asn-377 are each glycosylated (N-linked (GlcNAc...) asparagine). Thr-388 (nucleophile) is an active-site residue. Residues Thr-406, Glu-427, and 453 to 454 contribute to the L-glutamate site; that span reads SS.

It belongs to the gamma-glutamyltransferase family. In terms of assembly, heterodimer composed of the light and heavy chains. The active site is located in the light chain. In terms of processing, cleaved by autocatalysis into a large and a small subunit. Post-translationally, glycosylated. Widely expressed, but at low level, except in the airway epithelial cells. Detected in brain, heart, kidney, liver, lung, spleen, testis and trachea.

The protein localises to the membrane. The enzyme catalyses glutathione + H2O = L-cysteinylglycine + L-glutamate. The catalysed reaction is an S-substituted glutathione + H2O = an S-substituted L-cysteinylglycine + L-glutamate. It carries out the reaction leukotriene C4 + H2O = leukotriene D4 + L-glutamate. It catalyses the reaction S-[(2E,6E,10E)-geranylgeranyl]-L-glutathione + H2O = S-[(2E,6E,10E)-geranylgeranyl]-L-cysteinylglycine + L-glutamate. The enzyme catalyses an N-terminal (5-L-glutamyl)-[peptide] + an alpha-amino acid = 5-L-glutamyl amino acid + an N-terminal L-alpha-aminoacyl-[peptide]. Its pathway is lipid metabolism; leukotriene D4 biosynthesis. It participates in sulfur metabolism; glutathione metabolism. With respect to regulation, inhibited by serine-borate. Its function is as follows. Cleaves the gamma-glutamyl bond of extracellular glutathione tripeptide (gamma-Glu-Cys-Gly) and certain glutathione conjugates. Hydrolyzes glutathione releasing L-Glu and Cys-Gly dipeptide which is further metabolized to maintain extracellular cysteine levels but also to provide cysteine necessary for intracellular glutathione synthesis. Among glutathione-S-conjugates metabolizes leukotriene C4 (LTC4) and S-geranylgeranyl-glutathione (GGG), but is inactive toward gamma-glutamyl leucine. Converts extracellular LTC4 to LTD4 during acute inflammatory response. Acts as a negative regulator of GGG bioactivity. GGT5 (via GGG catabolism) and ABCC1 (via extracellular transport) establish GGG gradients within lymphoid tissues to position P2RY8-positive lymphocytes at germinal centers in lymphoid follicles and restrict their chemotactic transmigration from blood vessels to bone marrow parenchyma. The transpeptidation reaction, i.e. the transfer of gamma-glutamyl moiety to an acceptor molecule to yield a new gamma-glutamyl compound requires high concentration of dipeptide acceptor and is considered nonphysiological. The protein is Glutathione hydrolase 5 proenzyme (Ggt5) of Rattus norvegicus (Rat).